The sequence spans 364 residues: Acidic fibroblast growth factor intracellular-binding protein (364 aa).

T2 is modified (N-acetylthreonine).

As to quaternary structure, binds to internalized FGF1; this interaction is increased in the presence of CSNKB, suggesting a possible cooperative interaction between CSNKB and FIBP in binding to FGF1. Highly expressed in heart, skeletal muscle and pancreas. Expressed at lower levels in brain. Also found in placenta, liver and kidney.

The protein localises to the nucleus. It localises to the endomembrane system. Its function is as follows. May be involved in mitogenic function of FGF1. May mediate with IER2 FGF-signaling in the establishment of laterality in the embryo. This is Acidic fibroblast growth factor intracellular-binding protein (FIBP) from Homo sapiens (Human).